Here is a 167-residue protein sequence, read N- to C-terminus: Ribosome maturation factor RimM (167 aa).

In terms of domain architecture, PRC barrel spans 92–166; that stretch reads DGVYYYRELL…EVRVELMEGL (75 aa).

It belongs to the RimM family. In terms of assembly, binds ribosomal protein uS19.

The protein localises to the cytoplasm. Its function is as follows. An accessory protein needed during the final step in the assembly of 30S ribosomal subunit, possibly for assembly of the head region. Essential for efficient processing of 16S rRNA. May be needed both before and after RbfA during the maturation of 16S rRNA. It has affinity for free ribosomal 30S subunits but not for 70S ribosomes. The protein is Ribosome maturation factor RimM of Lactobacillus delbrueckii subsp. bulgaricus (strain ATCC 11842 / DSM 20081 / BCRC 10696 / JCM 1002 / NBRC 13953 / NCIMB 11778 / NCTC 12712 / WDCM 00102 / Lb 14).